A 271-amino-acid polypeptide reads, in one-letter code: MKSTNISRSFSKIKKEKRIALMPFLMAGDPDLETTAKILLELQANGADMIELGIPYSDPLADGPIIQLAASRALSAGTSPDRVFKMLFELRDQLTIPIILFTYSNPLINKGLEEFCLQASKVGVSGLVVPDLPLEEAEKLSDIAESKEIDLVLLVAPTTPKDRMKRIAATSNGFTYLVSVTGVTGERSSLEDNVGSLVQQLKDSSSSPIAVGFGISDVKHIEQVREWGADGAIVGSALVKRIANASIEMKVEEAGSFCKELRAATNEYFFK.

Catalysis depends on proton acceptor residues Glu51 and Asp62.

It belongs to the TrpA family. As to quaternary structure, tetramer of two alpha and two beta chains.

The catalysed reaction is (1S,2R)-1-C-(indol-3-yl)glycerol 3-phosphate + L-serine = D-glyceraldehyde 3-phosphate + L-tryptophan + H2O. Its pathway is amino-acid biosynthesis; L-tryptophan biosynthesis; L-tryptophan from chorismate: step 5/5. The alpha subunit is responsible for the aldol cleavage of indoleglycerol phosphate to indole and glyceraldehyde 3-phosphate. The sequence is that of Tryptophan synthase alpha chain from Prochlorococcus marinus (strain NATL2A).